Consider the following 669-residue polypeptide: Probable pectinesterase/pectinesterase inhibitor 21 (669 aa).

A helical membrane pass occupies residues 16–36 (IVITISSVLLISMVVAVTVGV). N-linked (GlcNAc...) asparagine glycosylation is found at Asn-52, Asn-81, Asn-94, Asn-281, and Asn-300. The pectinesterase inhibitor 21 stretch occupies residues 52–205 (NASVKAVKDV…IELTHNGLAI (154 aa)). A pectinesterase 21 region spans residues 255–551 (DIVVAQDGSG…FTPAQYIQGD (297 aa)). Residues Thr-330 and Gln-360 each contribute to the substrate site. Asp-383 acts as the Proton donor; for pectinesterase activity in catalysis. Residues Cys-397 and Cys-417 are joined by a disulfide bond. Catalysis depends on Asp-404, which acts as the Nucleophile; for pectinesterase activity. Asn-416 carries N-linked (GlcNAc...) asparagine glycosylation. Residues Arg-472 and Trp-474 each contribute to the substrate site. Positions 615 to 669 (AYTGTASPESSIKVSSSTETASPESSFTEASTASPESSIMVASTESSGSFFSMFT) are disordered. The span at 616–628 (YTGTASPESSIKV) shows a compositional bias: polar residues. The span at 629–652 (SSSTETASPESSFTEASTASPESS) shows a compositional bias: low complexity. Residues 654–669 (MVASTESSGSFFSMFT) show a composition bias toward polar residues.

This sequence in the N-terminal section; belongs to the PMEI family. It in the C-terminal section; belongs to the pectinesterase family. In terms of tissue distribution, expressed in flower buds.

Its subcellular location is the membrane. The catalysed reaction is [(1-&gt;4)-alpha-D-galacturonosyl methyl ester](n) + n H2O = [(1-&gt;4)-alpha-D-galacturonosyl](n) + n methanol + n H(+). It participates in glycan metabolism; pectin degradation; 2-dehydro-3-deoxy-D-gluconate from pectin: step 1/5. Its function is as follows. Acts in the modification of cell walls via demethylesterification of cell wall pectin. The protein is Probable pectinesterase/pectinesterase inhibitor 21 (PME21) of Arabidopsis thaliana (Mouse-ear cress).